The primary structure comprises 212 residues: Thymidylate kinase (212 aa).

10 to 17 (GLEGAGKT) contributes to the ATP binding site.

This sequence belongs to the thymidylate kinase family.

It catalyses the reaction dTMP + ATP = dTDP + ADP. Phosphorylation of dTMP to form dTDP in both de novo and salvage pathways of dTTP synthesis. The sequence is that of Thymidylate kinase from Yersinia enterocolitica serotype O:8 / biotype 1B (strain NCTC 13174 / 8081).